The chain runs to 229 residues: Biosynthetic peptidoglycan transglycosylase (229 aa).

A helical membrane pass occupies residues 14–34 (FITWRFLLVVVLLLLVLLLVL).

The protein belongs to the glycosyltransferase 51 family.

Its subcellular location is the cell inner membrane. It carries out the reaction [GlcNAc-(1-&gt;4)-Mur2Ac(oyl-L-Ala-gamma-D-Glu-L-Lys-D-Ala-D-Ala)](n)-di-trans,octa-cis-undecaprenyl diphosphate + beta-D-GlcNAc-(1-&gt;4)-Mur2Ac(oyl-L-Ala-gamma-D-Glu-L-Lys-D-Ala-D-Ala)-di-trans,octa-cis-undecaprenyl diphosphate = [GlcNAc-(1-&gt;4)-Mur2Ac(oyl-L-Ala-gamma-D-Glu-L-Lys-D-Ala-D-Ala)](n+1)-di-trans,octa-cis-undecaprenyl diphosphate + di-trans,octa-cis-undecaprenyl diphosphate + H(+). Its pathway is cell wall biogenesis; peptidoglycan biosynthesis. Its function is as follows. Peptidoglycan polymerase that catalyzes glycan chain elongation from lipid-linked precursors. The sequence is that of Biosynthetic peptidoglycan transglycosylase from Shewanella denitrificans (strain OS217 / ATCC BAA-1090 / DSM 15013).